Reading from the N-terminus, the 1238-residue chain is MDGCSAASTFLTDSLELELGTEWCKPPCFSCAFDNREGKFSGESYLASGALKRLILNLDPLPTNFEEDTVELFGFQWVTETALVYSCRELFHLFRQQIFNLESLVQVSCDFGKIATLHAKADSIRQQCVVFLHYIKVFIFRCLKVQEAESHSRPAHPYEALEAQLPSMLVDELRGLLLYIGHLAALPSVTVGAFVNQNQMKLFPPSWHLLHLYLDTHWLVLEILHILGEKLKQVVYGRQFIGQAGDNLTNVSLFEEHCEHLFCDLICLSLNRFDKVMPSEALLISHCPCSCVKELWVLLIHLLDHRRKWSVADSFWNWLNKLLRTLFEKSSDQRRSSVSLTQAKDPLGFSWWISVHVASLYQIDRHGVSDKMKQMESNWSFIEELLKRSVTVQDSILEEQLRMHLHCCLTLCDFWEPNISVVTILWEYYSKNLNSSFSISWLPLKGLTNIIKSPLSMLTLVRNCCSDKQDPDLYKSSSSYIIFLCILAKVVKKAMRTSGPHPWKQVKGRIYSKFHQKRMEELTEVGLQNFFSLFLLLAAVAEIEDVASHVLDLLRFLRPASMSSHGALVWKGQMAFLLMYAQKNLDIGVWAEKLSCEFQEKAKEFLVSKNDEMVQRHALWTLLCIYIDGVQEVFETSSCLYPSHEHLLNDGFSMLLPACRESELRTVLNFLQAVLARIRSVHQQLCQELQRENVDLTVQSSLSAKERPLAAVAGALWRHFFSFLKSQRMTQVVPLSQLADAAADFTLLAVDMPNTAPPDLQPQPVISIIQLFGWDDIIWPQVVARYLSHLLQNSTVYEALSQSSCVSSQSLTIRSWVRCVLQMHIKHLSDPDLLIDVNPEQAVEKEYMEQLAEMTRLLFTLSEVKSVFSKAQIEQLPSPDDPKQALIQFLEAVGVTYRTLQTFSDKSAMVTKSLEYLGEVLKYIKPYLGKKVSSAGLQLTYGIMGILVKSWAHIFATSKAQKLLFRIIDCLLLPHTVLQQDKELPGPMLTAIQKTLPLYLQGICIVCCQSQNPNAYLNQLLRNVIEQYIGRFLPTSPCVSDLGQHPVLLALRNPASVPSMTPLRKHTVHAIRKSYLEFKGSSPPPRLASVLAFVLQLFKDTEMGACDLELLLPGILKCLVLVNEPQVKKLATENLQCMVQTCQVGSEGGPATQLTSLFRQFIQDYGMQYSYQVYSILETVATLNQHVVIQLIPTLTQSLKDSELKWGLGRNIAQREAYSRLLSGLGQVGQGEKQRLEK.

It belongs to the MMS22 family. MMS22L subfamily. In terms of assembly, component of the MMS22L-TONSL complex, a complex at least composed of MMS22L and TONSL/NFKBIL2. Interacts with RAD51; interaction is direct. In terms of processing, degraded by the ubiquitin-proteasome system upon replication stress.

The protein localises to the nucleus. The protein resides in the chromosome. Functionally, component of the MMS22L-TONSL complex, a complex that promotes homologous recombination-mediated repair of double-strand breaks (DSBs) at stalled or collapsed replication forks. The MMS22L-TONSL complex is required to maintain genome integrity during DNA replication. It mediates the assembly of RAD51 filaments on single-stranded DNA (ssDNA): the MMS22L-TONSL complex is recruited to DSBs following histone replacement by histone chaperones and eviction of the replication protein A complex (RPA/RP-A) from DSBs. Following recruitment to DSBs, the TONSL-MMS22L complex promotes recruitment of RAD51 filaments and subsequent homologous recombination. Within the complex, MMS22L acts by binding ssDNA. The protein is Protein MMS22-like (Mms22l) of Mus musculus (Mouse).